Consider the following 472-residue polypeptide: Methylenetetrahydrofolate--tRNA-(uracil-5-)-methyltransferase TrmFO (472 aa).

10-15 (GGGLAG) lines the FAD pocket.

It belongs to the MnmG family. TrmFO subfamily. FAD is required as a cofactor.

The protein localises to the cytoplasm. The enzyme catalyses uridine(54) in tRNA + (6R)-5,10-methylene-5,6,7,8-tetrahydrofolate + NADH + H(+) = 5-methyluridine(54) in tRNA + (6S)-5,6,7,8-tetrahydrofolate + NAD(+). It catalyses the reaction uridine(54) in tRNA + (6R)-5,10-methylene-5,6,7,8-tetrahydrofolate + NADPH + H(+) = 5-methyluridine(54) in tRNA + (6S)-5,6,7,8-tetrahydrofolate + NADP(+). Catalyzes the folate-dependent formation of 5-methyl-uridine at position 54 (M-5-U54) in all tRNAs. The chain is Methylenetetrahydrofolate--tRNA-(uracil-5-)-methyltransferase TrmFO from Mesorhizobium japonicum (strain LMG 29417 / CECT 9101 / MAFF 303099) (Mesorhizobium loti (strain MAFF 303099)).